The sequence spans 150 residues: UPF0178 protein Daro_2879 (150 aa).

It belongs to the UPF0178 family.

The protein is UPF0178 protein Daro_2879 of Dechloromonas aromatica (strain RCB).